A 185-amino-acid polypeptide reads, in one-letter code: Elongation factor P (185 aa).

The protein belongs to the elongation factor P family.

It localises to the cytoplasm. The protein operates within protein biosynthesis; polypeptide chain elongation. Its function is as follows. Involved in peptide bond synthesis. Stimulates efficient translation and peptide-bond synthesis on native or reconstituted 70S ribosomes in vitro. Probably functions indirectly by altering the affinity of the ribosome for aminoacyl-tRNA, thus increasing their reactivity as acceptors for peptidyl transferase. This chain is Elongation factor P, found in Bacillus licheniformis (strain ATCC 14580 / DSM 13 / JCM 2505 / CCUG 7422 / NBRC 12200 / NCIMB 9375 / NCTC 10341 / NRRL NRS-1264 / Gibson 46).